The chain runs to 245 residues: Orotidine 5'-phosphate decarboxylase (245 aa).

Substrate-binding positions include Asp-22, Lys-44, 71 to 80 (DLKFHDIPNT), Thr-131, Arg-192, Gln-201, Gly-221, and Arg-222. Lys-73 functions as the Proton donor in the catalytic mechanism.

Belongs to the OMP decarboxylase family. Type 1 subfamily. Homodimer.

It carries out the reaction orotidine 5'-phosphate + H(+) = UMP + CO2. Its pathway is pyrimidine metabolism; UMP biosynthesis via de novo pathway; UMP from orotate: step 2/2. Its function is as follows. Catalyzes the decarboxylation of orotidine 5'-monophosphate (OMP) to uridine 5'-monophosphate (UMP). In Salmonella gallinarum (strain 287/91 / NCTC 13346), this protein is Orotidine 5'-phosphate decarboxylase.